Here is a 367-residue protein sequence, read N- to C-terminus: Peptide chain release factor 2 (367 aa).

Gln254 carries the post-translational modification N5-methylglutamine.

Belongs to the prokaryotic/mitochondrial release factor family. In terms of processing, methylated by PrmC. Methylation increases the termination efficiency of RF2.

It is found in the cytoplasm. Its function is as follows. Peptide chain release factor 2 directs the termination of translation in response to the peptide chain termination codons UGA and UAA. This chain is Peptide chain release factor 2, found in Neisseria meningitidis serogroup B (strain ATCC BAA-335 / MC58).